The following is a 277-amino-acid chain: MIDDGNVLLAFGLTLFAGLATGVGSAIAFFARRTDTRFLAVALGFSAGVMIYVSFVEIFRKAYEVLATQTTEVLASWYTVAAFFSGALLIAVIDKLVPGYENPHEMHTVEEMDMGRAALPQDTKHDFVRLKRAGVLAAVAIGIHNFPEGLAAFSAALSDPALGVAIAVAIAIHNIPEGMAVSVPIYYATGDRRKAFLYSFLSGVSEPIGALVGYVVLRPFFTPMVFGLLFASVAGIMVYISLDQLLPSAEEYGEHHLCILGVFSGMGVMALSLLLFL.

The next 8 membrane-spanning stretches (helical) occupy residues 7-27 (VLLAFGLTLFAGLATGVGSAI), 38-58 (FLAVALGFSAGVMIYVSFVEI), 73-93 (VLASWYTVAAFFSGALLIAVI), 133-155 (AGVLAAVAIGIHNFPEGLAAFSA), 165-187 (AIAVAIAIHNIPEGMAVSVPIYY), 196-216 (FLYSFLSGVSEPIGALVGYVV), 220-240 (FFTPMVFGLLFASVAGIMVYI), and 257-277 (LCILGVFSGMGVMALSLLLFL). N145 and E148 together coordinate Fe(2+). Zn(2+) contacts are provided by E148 and H173. Positions 174, 177, and 206 each coordinate Fe(2+). Zn(2+) is bound at residue E177.

Belongs to the ZIP transporter (TC 2.A.5) family. ZupT subfamily.

Its subcellular location is the cell inner membrane. The catalysed reaction is Zn(2+)(in) = Zn(2+)(out). Its function is as follows. Mediates zinc uptake. May also transport other divalent cations. This Nitratidesulfovibrio vulgaris (strain ATCC 29579 / DSM 644 / CCUG 34227 / NCIMB 8303 / VKM B-1760 / Hildenborough) (Desulfovibrio vulgaris) protein is Zinc transporter ZupT.